We begin with the raw amino-acid sequence, 151 residues long: FUN14 domain-containing protein 1 (151 aa).

The YXXL signature appears at 14–17 (YEVL). 3 helical membrane-spanning segments follow: residues 44-64 (YSVATQIVMGGVSGWCAGFLF), 71-91 (AATAVGGGFLLLQIASHGGYI), and 130-150 (FIKKNIVVSGGFVGGFLLGLA).

Belongs to the FUN14 family.

It localises to the mitochondrion outer membrane. In terms of biological role, acts as an activator of hypoxia-induced mitophagy, an important mechanism for mitochondrial quality control. The polypeptide is FUN14 domain-containing protein 1 (fundc1) (Xenopus tropicalis (Western clawed frog)).